A 583-amino-acid chain; its full sequence is Phosphoglucomutase, cytoplasmic (583 aa).

The disordered stretch occupies residues 1-20; sequence MATFKVSRVETKPYDGQKPG. Residues Arg-25 and Ser-124 each coordinate alpha-D-glucose 1,6-bisphosphate. Ser-124 serves as the catalytic Phosphoserine intermediate. The Mg(2+) site is built by Ser-124, Asp-300, Asp-302, and Asp-304. Ser-124 carries the phosphoserine modification. Residues Asp-304, Arg-305, Thr-368, Glu-387, Ser-389, and Lys-400 each contribute to the alpha-D-glucose 1,6-bisphosphate site.

The protein belongs to the phosphohexose mutase family. In terms of assembly, monomer. It depends on Mg(2+) as a cofactor.

Its subcellular location is the cytoplasm. It catalyses the reaction alpha-D-glucose 1-phosphate = alpha-D-glucose 6-phosphate. The enzyme catalyses O-phospho-L-seryl-[protein] + alpha-D-glucose 1-phosphate = alpha-D-glucose 1,6-bisphosphate + L-seryl-[protein]. It carries out the reaction alpha-D-glucose 1,6-bisphosphate + L-seryl-[protein] = O-phospho-L-seryl-[protein] + alpha-D-glucose 6-phosphate. Its function is as follows. Catalyzes the reversible isomerization of alpha-D-glucose 1-phosphate to alpha-D-glucose 6-phosphate. The mechanism proceeds via the intermediate compound alpha-D-glucose 1,6-bisphosphate. This enzyme participates in both the breakdown and synthesis of glucose. This is Phosphoglucomutase, cytoplasmic (PGM1) from Mesembryanthemum crystallinum (Common ice plant).